The sequence spans 415 residues: Phosphoglycerate kinase (415 aa).

Positions 23, 24, 25, 26, 39, 40, 63, 64, 66, 67, 122, 123, and 170 each coordinate (2R)-3-phosphoglycerate. G213 lines the ADP pocket. A CDP-binding site is contributed by G213. AMP-binding residues include A214 and K215. Residue A214 participates in ATP binding. A214 contacts Mg(2+). CDP is bound at residue D218. D218 serves as a coordination point for Mg(2+). K219 is a binding site for AMP. K219 contacts ATP. G237 is a binding site for ADP. G237 lines the CDP pocket. The AMP site is built by G238 and G311. Residues G238 and G311 each contribute to the ATP site. Positions 336 and 341 each coordinate CDP. F341 serves as a coordination point for ADP. E342 lines the AMP pocket. Positions 342, 373, and 374 each coordinate ATP. Position 373 (D373) interacts with Mg(2+).

Belongs to the phosphoglycerate kinase family. In terms of assembly, monomer. Mg(2+) serves as cofactor.

Its subcellular location is the cytoplasm. The protein localises to the mitochondrion. The enzyme catalyses (2R)-3-phosphoglycerate + ATP = (2R)-3-phospho-glyceroyl phosphate + ADP. It functions in the pathway carbohydrate degradation; glycolysis; pyruvate from D-glyceraldehyde 3-phosphate: step 2/5. Functionally, catalyzes one of the two ATP producing reactions in the glycolytic pathway via the reversible conversion of 1,3-diphosphoglycerate to 3-phosphoglycerate. Both L- and D- forms of purine and pyrimidine nucleotides can be used as substrates, but the activity is much lower on pyrimidines. Negatively regulates the biosynthesis of acetyl-CoA from pyruvate in the mitochondrion. This is Phosphoglycerate kinase (PGKA) from Penicillium chrysogenum (Penicillium notatum).